Reading from the N-terminus, the 62-residue chain is Large ribosomal subunit protein uL30 (62 aa).

Belongs to the universal ribosomal protein uL30 family. In terms of assembly, part of the 50S ribosomal subunit.

The protein is Large ribosomal subunit protein uL30 of Paracoccus denitrificans (strain Pd 1222).